A 546-amino-acid polypeptide reads, in one-letter code: Protein FAM124A (546 aa).

3 disordered regions span residues 1–37, 285–361, and 488–546; these read MDPK…SELS, KFPK…QRSK, and SSSS…EFYI. Residues 24-36 show a composition bias toward low complexity; sequence SDYSHLSSTSSEL. The segment covering 285–302 has biased composition (basic residues); the sequence is KFPKPGRVHHSSEKKRHS. Composition is skewed to polar residues over residues 304 to 324 and 347 to 361; these read PLPS…SPLN and ANST…QRSK. Over residues 488-511 the composition is skewed to low complexity; sequence SSSSATARAAPPAPSTSTLTDSSP.

This sequence belongs to the FAM124 family.

In Pongo abelii (Sumatran orangutan), this protein is Protein FAM124A (FAM124A).